The sequence spans 364 residues: tRNA 2-selenouridine synthase (364 aa).

The Rhodanese domain occupies 14 to 137 (LIADTPIIDV…LRQTAIQATI (124 aa)). C97 serves as the catalytic S-selanylcysteine intermediate.

Belongs to the SelU family. As to quaternary structure, monomer.

It carries out the reaction 5-methylaminomethyl-2-thiouridine(34) in tRNA + selenophosphate + (2E)-geranyl diphosphate + H2O + H(+) = 5-methylaminomethyl-2-selenouridine(34) in tRNA + (2E)-thiogeraniol + phosphate + diphosphate. The catalysed reaction is 5-methylaminomethyl-2-thiouridine(34) in tRNA + (2E)-geranyl diphosphate = 5-methylaminomethyl-S-(2E)-geranyl-thiouridine(34) in tRNA + diphosphate. It catalyses the reaction 5-methylaminomethyl-S-(2E)-geranyl-thiouridine(34) in tRNA + selenophosphate + H(+) = 5-methylaminomethyl-2-(Se-phospho)selenouridine(34) in tRNA + (2E)-thiogeraniol. The enzyme catalyses 5-methylaminomethyl-2-(Se-phospho)selenouridine(34) in tRNA + H2O = 5-methylaminomethyl-2-selenouridine(34) in tRNA + phosphate. Its function is as follows. Involved in the post-transcriptional modification of the uridine at the wobble position (U34) of tRNA(Lys), tRNA(Glu) and tRNA(Gln). Catalyzes the conversion of 2-thiouridine (S2U-RNA) to 2-selenouridine (Se2U-RNA). Acts in a two-step process involving geranylation of 2-thiouridine (S2U) to S-geranyl-2-thiouridine (geS2U) and subsequent selenation of the latter derivative to 2-selenouridine (Se2U) in the tRNA chain. The sequence is that of tRNA 2-selenouridine synthase from Shigella flexneri.